Here is a 62-residue protein sequence, read N- to C-terminus: Translational regulator CsrA (62 aa).

It belongs to the CsrA/RsmA family. As to quaternary structure, homodimer; the beta-strands of each monomer intercalate to form a hydrophobic core, while the alpha-helices form wings that extend away from the core.

The protein localises to the cytoplasm. In terms of biological role, a key translational regulator that binds mRNA to regulate translation initiation and/or mRNA stability. Mediates global changes in gene expression, shifting from rapid growth to stress survival by linking envelope stress, the stringent response and the catabolite repression systems. Usually binds in the 5'-UTR; binding at or near the Shine-Dalgarno sequence prevents ribosome-binding, repressing translation, binding elsewhere in the 5'-UTR can activate translation and/or stabilize the mRNA. Its function is antagonized by small RNA(s). This Idiomarina loihiensis (strain ATCC BAA-735 / DSM 15497 / L2-TR) protein is Translational regulator CsrA.